Reading from the N-terminus, the 439-residue chain is Vacuolar protein sorting-associated protein 4 (439 aa).

One can recognise an MIT domain in the interval 8–75; it reads LSKGIDLVQK…TRAEQLKDHL (68 aa). Residues 76-113 are disordered; it reads EKQAQNKSTAESSVNGSTKAKKSNGDGNGSGDDNDDAD. The span at 80–93 shows a compositional bias: polar residues; sequence QNKSTAESSVNGST. Residue 175 to 182 participates in ATP binding; it reads GPPGTGKS.

This sequence belongs to the AAA ATPase family. As to quaternary structure, monomer or homodimer (in nucleotide-free form). Decamer, dodecamer or tetradecamer of two stacked respective homooligomeric rings (when bound to ATP); the dodecameric form seems to be predominant.

It is found in the endosome membrane. Functionally, pre-vacuolar protein sorting protein involved in the transport of biosynthetic membrane proteins from the prevacuolar/endosomal compartment to the vacuole. Required for multivesicular body (MVB) protein sorting. Catalyzes the ATP-dependent dissociation of class E VPS proteins from endosomal membranes, such as the disassembly of the ESCRT-III complex. Required for extracellular secretion of the secreted aspartyl proteases SAP2, SAP4, SAP5, and SAP6. Its regulation of the pre-vacuolar secretory pathway is critical for virulence. The sequence is that of Vacuolar protein sorting-associated protein 4 from Candida albicans (strain SC5314 / ATCC MYA-2876) (Yeast).